The following is a 278-amino-acid chain: HTH-type transcriptional activator RhaS (278 aa).

One can recognise an HTH araC/xylS-type domain in the interval 174 to 272 (NLLLAWLEDH…NWSPRDIRQG (99 aa)). DNA-binding regions (H-T-H motif) lie at residues 191-212 (DAVA…KQQT) and 239-262 (VTDI…RREF).

As to quaternary structure, binds DNA as a dimer.

The protein localises to the cytoplasm. Functionally, activates expression of the rhaBAD and rhaT operons. In Escherichia coli O139:H28 (strain E24377A / ETEC), this protein is HTH-type transcriptional activator RhaS.